Consider the following 421-residue polypeptide: Caspase-12 (421 aa).

Residues Met-1–Ser-92 form the CARD domain. Residue Ser-85 is modified to Phosphoserine. Residues Tyr-88–Val-131 are disordered. Over residues Glu-109–Lys-118 the composition is skewed to acidic residues. Residues His-252 and Cys-300 contribute to the active site.

Belongs to the peptidase C14A family. In terms of assembly, heterotetramer that consists of two anti-parallel arranged heterodimers, each one formed by two subunits (Potential). May interact with TRAF2.

Its function is as follows. Involved in the activation cascade of caspases responsible for apoptosis execution. This Macaca mulatta (Rhesus macaque) protein is Caspase-12.